Consider the following 458-residue polypeptide: Histone acetyltransferase Tip60 homolog (458 aa).

The disordered stretch occupies residues Met-1–Pro-24. A Tudor-knot domain is found at Val-30–Leu-86. The disordered stretch occupies residues Lys-94–Ile-123. A compositionally biased stretch (basic and acidic residues) spans His-101–Lys-116. The MYST-type HAT domain occupies Thr-168 to Pro-446. Residues Ile-201 to Met-226 form a C2HC MYST-type zinc finger. N6-acetyllysine; by autocatalysis is present on Lys-268. Acetyl-CoA-binding positions include Ile-311–Val-313 and Gln-318–Ser-324. Glu-344 acts as the Proton donor/acceptor in catalysis. Acetyl-CoA contacts are provided by Ser-348 and Ser-357.

This sequence belongs to the MYST (SAS/MOZ) family. As to quaternary structure, interacts with transcription-associated protein trr-1. Probably a component of a complex with histone acetyltransferase (HAT) activity, at least composed of mys-1 and trr-1. Autoacetylation at Lys-268 is required for binding histones with high affinity and for proper function.

It localises to the nucleus. It carries out the reaction L-lysyl-[protein] + acetyl-CoA = N(6)-acetyl-L-lysyl-[protein] + CoA + H(+). Probable catalytic subunit of the Tip60 chromatin-remodeling complex. Plays a role in acetylation of nucleosomal histone H4 and perhaps also H2A, probably acting as a component of the Tip60 histone acetyltransferase complex. Acts in the determination of vulval and distal tip cell (DTC) precursor cell fates. Involved in the positive regulation of transcription factor daf-16, probably acting by histone acetylation; thereby modulating stress resistance. The polypeptide is Histone acetyltransferase Tip60 homolog (Caenorhabditis elegans).